Here is a 613-residue protein sequence, read N- to C-terminus: Apoptosis-inducing factor 1, mitochondrial (613 aa).

2 consecutive short sequence motifs (mitochondrial localization signal) follow at residues 1 to 31 (MFRC…PRQR) and 63 to 89 (KIDN…KTMK). Residues 1–54 (MFRCGGLAAGALKQKLVPLVRTVCVRSPRQRNRLPGNLFQRWHVPLELQMTRQM) constitute a mitochondrion transit peptide. A propeptide spans 55 to 101 (ASSGASGGKIDNSVLVLIVGLSTVGAGAYAYKTMKEDEKRYNERISG) (removed in mature form). A disordered region spans residues 100-127 (SGLGLTPEQKQKKAALSASEGEEVPQDK). Position 105 is a phosphothreonine (Thr-105). Lys-109 is modified (N6-succinyllysine). Residues Ser-116 and Ser-118 each carry the phosphoserine modification. Positions 134 to 483 (FLLIGGGTAA…KPYWHQSMFW (350 aa)) are FAD-dependent oxidoreductase. FAD is bound by residues 138–142 (GGGTA), 164–165 (ED), Arg-172, and Lys-177. NAD(+) is bound at residue Trp-196. Position 233 (Val-233) interacts with FAD. Lys-255 participates in a covalent cross-link: Glycyl lysine isopeptide (Lys-Gly) (interchain with G-Cter in ubiquitin). Phosphoserine is present on Ser-268. Arg-285 lines the FAD pocket. A Phosphoserine modification is found at Ser-292. NAD(+) contacts are provided by residues 308-311 (GGFL), Glu-336, and Lys-342. At Ser-371 the chain carries Phosphoserine. Residue Lys-388 is modified to N6-acetyllysine. Gly-399 is an NAD(+) binding site. Asp-438 is a binding site for FAD. Positions 446–451 (KLGRRR) match the Nuclear localization signal motif. Residues 453–454 (EH), Trp-483, and Glu-493 contribute to the NAD(+) site. Residues 454 to 455 (HH) and Trp-483 contribute to the FAD site. A compositionally biased stretch (polar residues) spans 513–529 (AQDNPKSATEQSGTGIR). A disordered region spans residues 513 to 554 (AQDNPKSATEQSGTGIRSESETESEASEITIPPSTPAVPQAP). At Thr-521 the chain carries Phosphothreonine. Ser-524 and Ser-530 each carry phosphoserine. An NAD(+)-binding site is contributed by Asn-583. N6-acetyllysine is present on Lys-593.

The protein belongs to the FAD-dependent oxidoreductase family. Monomer (oxidized form). Homodimer (reduced form). Upon reduction with NADH, undergoes dimerization and forms tight, long-lived FADH2-NAD charge transfer complexes (CTC) resistant to oxidation. Also dimerizes with isoform 3 preventing its release from mitochondria. Interacts with XIAP/BIRC4. Interacts (via N-terminus) with EIF3G (via C-terminus). Interacts with PRELID1. Interacts with CHCHD4; the interaction increases in presence of NADH. Interacts with processed form of PARP1 (Poly [ADP-ribose] polymerase 1, processed C-terminus); interaction is mediated with poly-ADP-ribose chains attached to PARP1, promoting translocation into the nucleus. FAD is required as a cofactor. Post-translationally, under normal conditions, a 54-residue N-terminal segment is first proteolytically removed during or just after translocation into the mitochondrial intermembrane space (IMS) by the mitochondrial processing peptidase (MPP) to form the inner-membrane-anchored mature form (AIFmit). During apoptosis, it is further proteolytically processed at amino-acid position 101 leading to the generation of the mature form, which is confined to the mitochondrial IMS in a soluble form (AIFsol). AIFsol is released to the cytoplasm in response to specific death signals, and translocated to the nucleus, where it induces nuclear apoptosis in a caspase-independent manner. In terms of processing, ubiquitination by XIAP/BIRC4 does not lead to proteasomal degradation. Ubiquitination at Lys-255 by XIAP/BIRC4 blocks its ability to bind DNA and induce chromatin degradation, thereby inhibiting its ability to induce cell death. In terms of tissue distribution, expressed in all tested tissues. Detected in muscle and skin fibroblasts (at protein level). Expressed in osteoblasts (at protein level). Brain specific. As to expression, expressed in all tested tissues except brain. In terms of tissue distribution, isoform 5 is frequently down-regulated in human cancers.

Its subcellular location is the mitochondrion intermembrane space. It is found in the mitochondrion inner membrane. The protein resides in the cytoplasm. The protein localises to the nucleus. It localises to the perinuclear region. Its subcellular location is the mitochondrion. It is found in the cytosol. It carries out the reaction A + NADH + H(+) = AH2 + NAD(+). Its function is as follows. Functions both as NADH oxidoreductase and as regulator of apoptosis. In response to apoptotic stimuli, it is released from the mitochondrion intermembrane space into the cytosol and to the nucleus, where it functions as a proapoptotic factor in a caspase-independent pathway. Release into the cytoplasm is mediated upon binding to poly-ADP-ribose chains. The soluble form (AIFsol) found in the nucleus induces 'parthanatos' i.e. caspase-independent fragmentation of chromosomal DNA. Binds to DNA in a sequence-independent manner. Interacts with EIF3G, and thereby inhibits the EIF3 machinery and protein synthesis, and activates caspase-7 to amplify apoptosis. Plays a critical role in caspase-independent, pyknotic cell death in hydrogen peroxide-exposed cells. In contrast, participates in normal mitochondrial metabolism. Plays an important role in the regulation of respiratory chain biogenesis by interacting with CHCHD4 and controlling CHCHD4 mitochondrial import. Has NADH oxidoreductase activity. Does not induce nuclear apoptosis. In terms of biological role, pro-apoptotic isoform. The sequence is that of Apoptosis-inducing factor 1, mitochondrial from Homo sapiens (Human).